We begin with the raw amino-acid sequence, 544 residues long: Chaperonin GroEL 1 (544 aa).

ATP is bound by residues 29 to 32 (TLGP), 86 to 90 (DGTTT), glycine 413, and aspartate 495.

It belongs to the chaperonin (HSP60) family. As to quaternary structure, forms a cylinder of 14 subunits composed of two heptameric rings stacked back-to-back. Interacts with the co-chaperonin GroES.

The protein resides in the cytoplasm. It carries out the reaction ATP + H2O + a folded polypeptide = ADP + phosphate + an unfolded polypeptide.. In terms of biological role, together with its co-chaperonin GroES, plays an essential role in assisting protein folding. The GroEL-GroES system forms a nano-cage that allows encapsulation of the non-native substrate proteins and provides a physical environment optimized to promote and accelerate protein folding. This is Chaperonin GroEL 1 from Synechococcus sp. (strain ATCC 27144 / PCC 6301 / SAUG 1402/1) (Anacystis nidulans).